Consider the following 348-residue polypeptide: Dihydroorotase (348 aa).

Zn(2+)-binding residues include histidine 13 and histidine 15. Substrate is bound by residues 15–17 (HLR) and asparagine 41. Residues lysine 99, histidine 136, and histidine 174 each contribute to the Zn(2+) site. N6-carboxylysine is present on lysine 99. Histidine 136 contributes to the substrate binding site. Leucine 219 contributes to the substrate binding site. A Zn(2+)-binding site is contributed by aspartate 247. Aspartate 247 is an active-site residue. Residues histidine 251 and alanine 263 each coordinate substrate.

Belongs to the metallo-dependent hydrolases superfamily. DHOase family. Class II DHOase subfamily. Homodimer. The cofactor is Zn(2+).

The enzyme catalyses (S)-dihydroorotate + H2O = N-carbamoyl-L-aspartate + H(+). Its pathway is pyrimidine metabolism; UMP biosynthesis via de novo pathway; (S)-dihydroorotate from bicarbonate: step 3/3. In terms of biological role, catalyzes the reversible cyclization of carbamoyl aspartate to dihydroorotate. The chain is Dihydroorotase from Rhizobium johnstonii (strain DSM 114642 / LMG 32736 / 3841) (Rhizobium leguminosarum bv. viciae).